A 611-amino-acid chain; its full sequence is Chloroplast sensor kinase, chloroplastic (611 aa).

The N-terminal 79 residues, 1–79 (MLLSAIASQT…PGGGETMVAS (79 aa)), are a transit peptide targeting the chloroplast. The segment at 17 to 50 (NLHFSNSIPNPRPSNPSLKLLNASSSSSSSSSSS) is disordered. Over residues 40 to 50 (SSSSSSSSSSS) the composition is skewed to low complexity. The segment at 116–300 (DFQRLCLEQL…VMDQKTMLLQ (185 aa)) is GAF. A [3Fe-4S] cluster-binding site is contributed by Cys121. The residue at position 188 (Ser188) is a Phosphoserine. Positions 312–602 (KLVEQIRGPL…RVELWLPAFP (291 aa)) constitute a Histidine kinase domain. Residues 345-380 (VEDLIVQGDQIKDTLEELQDAVHLTKANIVRHNEEA) adopt a coiled-coil conformation. Over residues 385–402 (NKTHNETRRSKYEHKDPI) the composition is skewed to basic and acidic residues. The disordered stretch occupies residues 385–420 (NKTHNETRRSKYEHKDPIDGSQISSTRLSLGSGLDD).

The protein belongs to the chloroplast sensor kinase protein family. In terms of assembly, self-interacts. Interacts with the plastoquinone analog 2,5-dibromo-3-methyl-5-isopropyl-p-benzoquinone (DBMIB) and with SIGA/SIG1. The cofactor is [3Fe-4S] cluster. In terms of processing, autophosphorylated, possibly on tyrosine residues, in photosystem I (PS I) light and in the presence of manganese ions Mn(2+), to a lesser degree, in the presence of calcium ions Ca(2+), but not in the presence of magnesium ions Mg(2+). Dithiothreitol (DTT) stimulates autophosphorylation. Phosphorylated on Ser-188 in vivo after exposure to far-red light (when plastoquinone (PQ) is oxidized). Not phosphorylated under orange light (reduces PQ).

Its subcellular location is the plastid. The protein resides in the chloroplast stroma. It catalyses the reaction L-tyrosyl-[protein] + ATP = O-phospho-L-tyrosyl-[protein] + ADP + H(+). In terms of biological role, sensor kinase that senses the plastoquinone (PQ) redox state involved in stoichiometry adjustment of both photosystems (e.g. long-term adaptation via transcriptional regulation of reaction center genes of photosystems I and II) and state transitions (e.g. short-term adaptation involving reversible post-translational phosphorylation of light-harvesting complex II, LHC II), thus linking photosynthesis with gene expression in chloroplasts. Autophosphorylates, probably on a tyrosine residue. Probably phosphorylates SIGA/SIG1 in response to plastoquinone redox state modification. Reduced PQ suppresses its autophosphorylation activity. Represses expression of a number of chloroplast-encoded genes. The sequence is that of Chloroplast sensor kinase, chloroplastic from Arabidopsis thaliana (Mouse-ear cress).